Here is a 127-residue protein sequence, read N- to C-terminus: MAYPYQGRDNRLITGRIHPRARKKRKYELGREPTFTRVGERKIKKIRVRGGNIKIRLKRDMYVNVYDPTQGKTVKAKIVRFLDNPSNRNFARMGILTKGAIVETELGKVKITSRPGQDGVLNGVLIQ.

The protein belongs to the eukaryotic ribosomal protein eS8 family. Part of the 30S ribosomal subunit.

In Nanoarchaeum equitans (strain Kin4-M), this protein is Small ribosomal subunit protein eS8.